The chain runs to 367 residues: Putative ionic transporter y4hA (367 aa).

11 helical membrane-spanning segments follow: residues 12–32 (VPLWSWIIPLFGCVIAAMTLA), 39–59 (SVVLLLMSAGLLTGAVFASVH), 74–94 (AILLAVCVTIIEVAIIGSLML), 108–128 (VFAAVMIVLNGVIGLCLVLGG), 143–163 (AALAVLGTLATLSLVLPNFVT), 172–192 (AIQLVVIGLVSVVLYGVFLFV), 221–241 (LAAGALLVLALIAVILLAMLL), 249–269 (VEALGLPQAVVGVTIAGVVLL), 291–311 (VLGSALASIGVTIPVVAAISV), 318–338 (ALGLAPQNLIMLILTLFVGTI), and 347–367 (VLQGAVHLAIFTVFLLLSAIP).

Belongs to the Ca(2+):cation antiporter (CaCA) (TC 2.A.19) family.

Its subcellular location is the cell membrane. Its function is as follows. Possible cation transporter. This chain is Putative ionic transporter y4hA, found in Sinorhizobium fredii (strain NBRC 101917 / NGR234).